The sequence spans 20 residues: Ranalexin-1Cb (20 aa).

Cysteine 14 and cysteine 20 form a disulfide bridge.

Expressed by the skin glands.

The protein resides in the secreted. Its function is as follows. Antibacterial activity against Gram-positive bacterium S.aureus and Gram-negative bacterium E.coli. Has activity against C.albicans. The protein is Ranalexin-1Cb of Lithobates clamitans (Green frog).